The sequence spans 649 residues: Golgin subfamily A member 6-like protein 26 (649 aa).

Disordered stretches follow at residues 1 to 94, 300 to 330, 358 to 440, 455 to 572, and 584 to 620; these read MWPQ…HQEA, QEEK…RQEE, EKMH…EMWR, KEKM…REQE, and EQEE…MRRQ. Positions 10-23 are enriched in low complexity; it reads HPHLPTHPHLPTHP. Residues 25 to 46 show a composition bias toward basic and acidic residues; that stretch reads MSKETRQSKLAEAKEQLTDHHP. Composition is skewed to polar residues over residues 47 to 57 and 65 to 77; these read QTNPSVGTAAS and NNGT…TSGG. A compositionally biased stretch (basic and acidic residues) spans 80–94; the sequence is SPEDEQKASHQHQEA. Residues 151 to 644 are a coiled coil; the sequence is LEQALSAVAT…EEKMQEHQEH (494 aa).

The protein belongs to the GOLGA6 family.

The chain is Golgin subfamily A member 6-like protein 26 (GOLGA6L26) from Homo sapiens (Human).